The chain runs to 200 residues: dITP/XTP pyrophosphatase (200 aa).

Residue 8-13 participates in substrate binding; the sequence is TRNAGK. Asp72 serves as the catalytic Proton acceptor. A Mg(2+)-binding site is contributed by Asp72. Substrate-binding positions include Ser73, 155-158, Lys178, and 183-184; these read FGYD and HR.

Belongs to the HAM1 NTPase family. Homodimer. The cofactor is Mg(2+).

The catalysed reaction is XTP + H2O = XMP + diphosphate + H(+). It catalyses the reaction dITP + H2O = dIMP + diphosphate + H(+). It carries out the reaction ITP + H2O = IMP + diphosphate + H(+). Functionally, pyrophosphatase that catalyzes the hydrolysis of nucleoside triphosphates to their monophosphate derivatives, with a high preference for the non-canonical purine nucleotides XTP (xanthosine triphosphate), dITP (deoxyinosine triphosphate) and ITP. Seems to function as a house-cleaning enzyme that removes non-canonical purine nucleotides from the nucleotide pool, thus preventing their incorporation into DNA/RNA and avoiding chromosomal lesions. The protein is dITP/XTP pyrophosphatase of Streptomyces coelicolor (strain ATCC BAA-471 / A3(2) / M145).